The chain runs to 1130 residues: BTB/POZ domain-containing protein 7 (1130 aa).

Over residues 1-10 (MGANASNYPH) the composition is skewed to polar residues. Residues 1 to 24 (MGANASNYPHSCSPRVGGNSQAQQ) are disordered. Residue Gly2 is the site of N-myristoyl glycine attachment. BTB domains lie at 142-211 (TDVD…GMED) and 247-341 (YDVV…DLSV). Residues 413–479 (YGSKWVHRQA…WGEHQLMKRI (67 aa)) enclose the BACK domain. Phosphoserine is present on Ser722. 2 disordered regions span residues 898 to 1050 (SEAG…PAHV) and 1062 to 1130 (FGLT…KSAL). 2 stretches are compositionally biased toward basic and acidic residues: residues 923–935 (PTLEQKADGRENQ) and 996–1005 (KKQEDPRREY). Ser1008 carries the post-translational modification Phosphoserine. Positions 1063–1075 (GLTSNRPPSHSAC) are enriched in polar residues. 2 stretches are compositionally biased toward basic and acidic residues: residues 1080-1090 (LEERSSRRLTD) and 1101-1112 (RNADLERGDSIS).

In terms of tissue distribution, specifically expressed in embryonic epithelia.

It localises to the nucleus. Functionally, acts as a mediator of epithelial dynamics and organ branching by promoting cleft progression. Induced following accumulation of fibronectin in forming clefts, leading to local expression of the cell-scattering SNAIL2 and suppression of E-cadherin levels, thereby altering cell morphology and reducing cell-cell adhesion. This stimulates cell separation at the base of forming clefts by local, dynamic intercellular gap formation and promotes cleft progression. This Mus musculus (Mouse) protein is BTB/POZ domain-containing protein 7 (Btbd7).